The primary structure comprises 514 residues: Maturase K (514 aa).

The protein belongs to the intron maturase 2 family. MatK subfamily.

Its subcellular location is the plastid. The protein resides in the chloroplast. In terms of biological role, usually encoded in the trnK tRNA gene intron. Probably assists in splicing its own and other chloroplast group II introns. This Drosophyllum lusitanicum (Portuguese sundew) protein is Maturase K.